A 435-amino-acid chain; its full sequence is Glutamyl-tRNA reductase (435 aa).

Residues 49-52 (TCNR), serine 114, 119-121 (EPQ), and glutamine 125 each bind substrate. The Nucleophile role is filled by cysteine 50. 204–209 (GAGETI) lines the NADP(+) pocket.

This sequence belongs to the glutamyl-tRNA reductase family. As to quaternary structure, homodimer.

It catalyses the reaction (S)-4-amino-5-oxopentanoate + tRNA(Glu) + NADP(+) = L-glutamyl-tRNA(Glu) + NADPH + H(+). It participates in porphyrin-containing compound metabolism; protoporphyrin-IX biosynthesis; 5-aminolevulinate from L-glutamyl-tRNA(Glu): step 1/2. Functionally, catalyzes the NADPH-dependent reduction of glutamyl-tRNA(Glu) to glutamate 1-semialdehyde (GSA). In Actinobacillus succinogenes (strain ATCC 55618 / DSM 22257 / CCUG 43843 / 130Z), this protein is Glutamyl-tRNA reductase.